The following is an 860-amino-acid chain: Pentatricopeptide repeat-containing protein At2g40720 (860 aa).

PPR repeat units follow at residues 59-93 (SVFT…GWRY), 94-124 (DPFI…WSQS), 132-166 (DVTV…GVRP), 167-203 (DAFS…SLDT), 204-234 (DSFL…IEDK), 236-270 (NVVL…SVKL), 271-305 (VSTS…GLHN), 306-340 (DPYV…RLEI), 341-371 (WNAM…SVLP), 372-406 (DSFT…PIQS), 407-437 (TSTI…MEEK), 438-472 (DMVA…DDSL), 475-509 (DSDI…GLVL), 510-540 (NVFV…MSTE), 541-575 (NMVA…GIFP), 576-610 (DSVS…GIPS), 611-641 (DTHL…MQHK), 642-676 (SLIT…GESP), 677-707 (DDVT…MKQD), and 713-743 (NMEH…MPIE). The segment at 748–823 (IWLCLLSASR…QPGCSWIEVS (76 aa)) is type E motif. The interval 824–854 (DRTNVFFSGGSSSPMKAEIFNVLNRLKSNMV) is type E(+) motif.

It belongs to the PPR family. PCMP-E subfamily.

The protein is Pentatricopeptide repeat-containing protein At2g40720 (PCMP-E26) of Arabidopsis thaliana (Mouse-ear cress).